The sequence spans 620 residues: Glutathione-regulated potassium-efflux system protein KefC (620 aa).

The Periplasmic portion of the chain corresponds to 1–3; sequence MDS. A helical transmembrane segment spans residues 4 to 24; it reads HTLLQALIYLGSAALIVPIAV. A topological domain (cytoplasmic) is located at residue Arg25. The chain crosses the membrane as a helical span at residues 26 to 46; sequence LGLGSVLGYLIAGCIIGPWGL. At 47–53 the chain is on the periplasmic side; the sequence is RLVTDAE. A helical membrane pass occupies residues 54–74; it reads SILHFAEIGVVLMLFVIGLEL. Residues 75 to 89 lie on the Cytoplasmic side of the membrane; that stretch reads DPQRLWKLRASVFGG. A helical membrane pass occupies residues 90–110; that stretch reads GALQMVVCGGLIGLFCMFLGL. Over 111–113 the chain is Periplasmic; sequence RWQ. The chain crosses the membrane as a helical span at residues 114–134; it reads VAELIGMTLALSSTAIAMQAM. Residues 135-148 lie on the Cytoplasmic side of the membrane; sequence NERNLTVSQVGRSA. The chain crosses the membrane as a helical span at residues 149-169; it reads FAVLLFQDIAAIPLVAMIPLL. Residues 170 to 177 lie on the Periplasmic side of the membrane; the sequence is AASGASTT. Residues 178 to 198 form a helical membrane-spanning segment; the sequence is LGAFALSALKVAGALALVVLL. Residues 199–213 lie on the Cytoplasmic side of the membrane; sequence GRYVTRPALRFVARS. The helical transmembrane segment at 214–233 threads the bilayer; it reads GLREVFSAVALFLVFGFGLL. Residues 234–236 lie on the Periplasmic side of the membrane; that stretch reads LEE. Residues 237–254 traverse the membrane as a helical segment; the sequence is VGLSMAMGAFLAGVLLAS. Over 255-269 the chain is Cytoplasmic; that stretch reads SEYRHALESDIEPFK. Residues 270-290 form a helical membrane-spanning segment; the sequence is GLLLGLFFIGVGMSIDFGTLV. Residues 291–293 lie on the Periplasmic side of the membrane; the sequence is ENP. The chain crosses the membrane as a helical span at residues 294–314; it reads LRILLLLAGFLAIKIVMLWLV. The Cytoplasmic portion of the chain corresponds to 315–326; that stretch reads ARTLGVPAKQRR. Residues 327–347 form a helical membrane-spanning segment; it reads WFAVLLGQGSEFAFVVFGAAQ. Over 348–358 the chain is Periplasmic; that stretch reads MADVLEPEWAK. Residues 359–379 form a helical membrane-spanning segment; it reads ALTLAVALSMAATPIFLVLLT. Residues 380–620 lie on the Cytoplasmic side of the membrane; that stretch reads RMEKTATGEA…ADEPEVKPSI (241 aa). The 120-residue stretch at 399–518 folds into the RCK N-terminal domain; sequence QPRVIVAGFG…AGVAMPERET (120 aa). A disordered region spans residues 599-620; the sequence is QGTAEGKHSGKAADEPEVKPSI. A compositionally biased stretch (basic and acidic residues) spans 603–620; that stretch reads EGKHSGKAADEPEVKPSI.

Belongs to the monovalent cation:proton antiporter 2 (CPA2) transporter (TC 2.A.37) family. KefC subfamily. In terms of assembly, homodimer. Interacts with the regulatory subunit KefF.

The protein resides in the cell inner membrane. Its function is as follows. Pore-forming subunit of a potassium efflux system that confers protection against electrophiles. Catalyzes K(+)/H(+) antiport. The polypeptide is Glutathione-regulated potassium-efflux system protein KefC (Salmonella typhi).